Reading from the N-terminus, the 349-residue chain is tRNA pseudouridine synthase D (349 aa).

Position 27 (F27) interacts with substrate. D80 serves as the catalytic Nucleophile. Position 129 (N129) interacts with substrate. In terms of domain architecture, TRUD spans 155 to 303 (GVPNYFGAQR…VEAARRAMLL (149 aa)). F329 contacts substrate.

Belongs to the pseudouridine synthase TruD family.

It catalyses the reaction uridine(13) in tRNA = pseudouridine(13) in tRNA. In terms of biological role, responsible for synthesis of pseudouridine from uracil-13 in transfer RNAs. This chain is tRNA pseudouridine synthase D, found in Shigella sonnei (strain Ss046).